Reading from the N-terminus, the 145-residue chain is HTH-type transcriptional regulator MhqR (145 aa).

An HTH marR-type domain is found at 5 to 137; that stretch reads SLKLFIVLSR…CTEMLKRVGL (133 aa). The H-T-H motif DNA-binding region spans 51-74; the sequence is LQQIGDKILLASGSITYVVDKLEQ.

Negatively regulates mhqA, mhqED, mhqNOP, and azoR2 which may contribute to the degradation of aromatic compounds. In Bacillus subtilis (strain 168), this protein is HTH-type transcriptional regulator MhqR (mhqR).